The sequence spans 159 residues: Succinate dehydrogenase [ubiquinone] cytochrome b small subunit, mitochondrial (159 aa).

The N-terminal 56 residues, Met1–Gln56, are a transit peptide targeting the mitochondrion. Residues Ser57 to Ser63 lie on the Mitochondrial matrix side of the membrane. A helical transmembrane segment spans residues Leu64–Leu85. The Mitochondrial intermembrane portion of the chain corresponds to Asn86–Val90. A helical membrane pass occupies residues Val91 to Val111. Heme b is bound at residue His102. Residues Thr112–Leu120 are Mitochondrial matrix-facing. Tyr114 lines the a ubiquinone pocket. The helical transmembrane segment at Gln121–Phe142 threads the bilayer. Topologically, residues Asn143–Leu159 are mitochondrial intermembrane.

The protein belongs to the CybS family. Component of complex II composed of four subunits: the flavoprotein (FP) SDHA, iron-sulfur protein (IP) SDHB, and a cytochrome b560 composed of SDHC and SDHD.

It is found in the mitochondrion inner membrane. It participates in carbohydrate metabolism; tricarboxylic acid cycle. Functionally, membrane-anchoring subunit of succinate dehydrogenase (SDH) that is involved in complex II of the mitochondrial electron transport chain and is responsible for transferring electrons from succinate to ubiquinone (coenzyme Q). SDH also oxidizes malate to the non-canonical enol form of oxaloacetate, enol-oxaloacetate. Enol-oxaloacetate, which is a potent inhibitor of the succinate dehydrogenase activity, is further isomerized into keto-oxaloacetate. In Rattus norvegicus (Rat), this protein is Succinate dehydrogenase [ubiquinone] cytochrome b small subunit, mitochondrial (Sdhd).